We begin with the raw amino-acid sequence, 102 residues long: MFAIVETGGKQYKVKEQDVIKIEKLNASVGEEVTLDKVIALADVNNNIVFTHNAIVTASVLEQCRNDKIIVFKKKRRKNYRRKNGHRQYMTVLRVTKINNME.

This sequence belongs to the bacterial ribosomal protein bL21 family. In terms of assembly, part of the 50S ribosomal subunit. Contacts protein L20.

Its function is as follows. This protein binds to 23S rRNA in the presence of protein L20. This chain is Large ribosomal subunit protein bL21, found in Ehrlichia chaffeensis (strain ATCC CRL-10679 / Arkansas).